A 510-amino-acid chain; its full sequence is ATP synthase subunit alpha 1 (510 aa).

167 to 174 (GDRATGKT) provides a ligand contact to ATP.

Belongs to the ATPase alpha/beta chains family. As to quaternary structure, F-type ATPases have 2 components, CF(1) - the catalytic core - and CF(0) - the membrane proton channel. CF(1) has five subunits: alpha(3), beta(3), gamma(1), delta(1), epsilon(1). CF(0) has three main subunits: a(1), b(2) and c(9-12). The alpha and beta chains form an alternating ring which encloses part of the gamma chain. CF(1) is attached to CF(0) by a central stalk formed by the gamma and epsilon chains, while a peripheral stalk is formed by the delta and b chains.

The protein resides in the cell inner membrane. The catalysed reaction is ATP + H2O + 4 H(+)(in) = ADP + phosphate + 5 H(+)(out). Functionally, produces ATP from ADP in the presence of a proton gradient across the membrane. The alpha chain is a regulatory subunit. The sequence is that of ATP synthase subunit alpha 1 from Paraburkholderia xenovorans (strain LB400).